Here is a 224-residue protein sequence, read N- to C-terminus: Glutathione S-transferase U4 (224 aa).

The 80-residue stretch at glutamate 6–proline 85 folds into the GST N-terminal domain. Residues serine 16–proline 17, asparagine 42–lysine 43, lysine 56–valine 57, and glutamate 69–serine 70 contribute to the glutathione site. In terms of domain architecture, GST C-terminal spans aspartate 90–valine 217. Threonine 151 is modified (phosphothreonine).

It belongs to the GST superfamily. Tau family.

The protein resides in the cytoplasm. It localises to the cytosol. It catalyses the reaction RX + glutathione = an S-substituted glutathione + a halide anion + H(+). Its function is as follows. May be involved in the conjugation of reduced glutathione to a wide number of exogenous and endogenous hydrophobic electrophiles and have a detoxification role against certain herbicides. In Arabidopsis thaliana (Mouse-ear cress), this protein is Glutathione S-transferase U4 (GSTU4).